Reading from the N-terminus, the 340-residue chain is Ferrochelatase (340 aa).

Positions 189 and 292 each coordinate Fe cation.

This sequence belongs to the ferrochelatase family.

The protein localises to the cytoplasm. It catalyses the reaction heme b + 2 H(+) = protoporphyrin IX + Fe(2+). It functions in the pathway porphyrin-containing compound metabolism; protoheme biosynthesis; protoheme from protoporphyrin-IX: step 1/1. Its function is as follows. Catalyzes the ferrous insertion into protoporphyrin IX. In Pseudomonas aeruginosa (strain UCBPP-PA14), this protein is Ferrochelatase.